Reading from the N-terminus, the 86-residue chain is CLAVATA3/ESR (CLE)-related protein 8 (86 aa).

A signal peptide spans 1–24 (MKVLKRDSMLLLITLYFLLTTSMA). The interval 43–86 (DLKQNKAKPHLPNLFRTMRRVPTGPNPLHHISPPQPGSLNYARN) is disordered. Hydroxyproline occurs at positions 64 and 67. Pro-67 is a glycosylation site (O-linked (Ara...) hydroxyproline).

It belongs to the CLV3/ESR signal peptide family. Post-translationally, the O-glycosylation (arabinosylation) of the hydroxyproline Pro-67 enhances binding affinity of the CLE8p peptide for its receptor. As to expression, mostly expressed in siliques, and, to a lower extent, in flowers. Expressed in young embryos and endosperm.

Its subcellular location is the secreted. It localises to the extracellular space. Its function is as follows. Extracellular signal peptide that regulates cell fate. Represses root apical meristem maintenance. Positively regulates the expression of the transcription factor WOX8 and thus, regulates early embryo development. Regulates the transition of protophloem cells from proliferation to differentiation, thus impinging on postembryonic growth capacity of the root meristem; this signaling pathway requires CRN and CLV2. The protein is CLAVATA3/ESR (CLE)-related protein 8 of Arabidopsis thaliana (Mouse-ear cress).